We begin with the raw amino-acid sequence, 304 residues long: Solute carrier family 25 member 34 (304 aa).

Solcar repeat units lie at residues Val-4–Ala-97, Gln-101–Trp-194, and Asp-204–Leu-295. The next 6 membrane-spanning stretches (helical) occupy residues Ala-7 to Leu-27, Thr-45 to Gly-65, Gly-98 to Val-120, Val-170 to Ala-191, Trp-206 to Pro-226, and Leu-278 to His-301.

It belongs to the mitochondrial carrier (TC 2.A.29) family.

It is found in the mitochondrion inner membrane. It catalyses the reaction a dicarboxylate(in) + sulfate(out) = a dicarboxylate(out) + sulfate(in). Its function is as follows. Putative antiporter that exchanges dicarboxylates and sulfur oxoanions across the inner membrane of mitochondria. The polypeptide is Solute carrier family 25 member 34 (SLC25A34) (Bos taurus (Bovine)).